We begin with the raw amino-acid sequence, 983 residues long: Envelope glycoprotein gp160 (983 aa).

A compositionally biased stretch (basic and acidic residues) spans 1 to 20; that stretch reads MASKESKPSRTTRRGMEPPL. The segment at 1–22 is disordered; sequence MASKESKPSRTTRRGMEPPLRE. The N-terminal stretch at 1–106 is a signal peptide; that stretch reads MASKESKPSR…CLMWEVRKGN (106 aa). At 107–832 the chain is on the extracellular side; that stretch reads QCQAEEVIAL…WSSWFSWLKY (726 aa). Residues Asn-140, Asn-161, Asn-206, Asn-258, Asn-298, Asn-364, Asn-381, Asn-387, Asn-403, Asn-414, Asn-435, Asn-439, Asn-470, Asn-475, Asn-481, Asn-491, Asn-501, Asn-515, Asn-527, Asn-537, Asn-542, Asn-543, and Asn-568 are each glycosylated (N-linked (GlcNAc...) asparagine; by host). The segment at 657–677 is fusion peptide; the sequence is GIGLVIVLAIMAIIAAAGAGL. A coiled-coil region spans residues 689 to 739; that stretch reads RTAVQSLANATAAQQEVLEASYAMVQHIAKGIRILEARVARVEALVDRMMV. Asn-697 is a glycosylation site (N-linked (GlcNAc...) asparagine; by host). Positions 723 to 739 are immunosuppression; that stretch reads LEARVARVEALVDRMMV. 4 N-linked (GlcNAc...) asparagine; by host glycosylation sites follow: Asn-765, Asn-772, Asn-788, and Asn-822. Residues 780–815 adopt a coiled-coil conformation; that stretch reads EEIEQHEGNLSLLLREAALQVHIAQRDARRIPDAWK. The helical transmembrane segment at 833-853 threads the bilayer; that stretch reads IPWIIMGIVGLMCFRILMCVI. Residues 854–983 are Cytoplasmic-facing; the sequence is SMCLQAYKQV…PTLENDYVEL (130 aa). Cys-856 carries the S-palmitoyl cysteine; by host lipid modification.

In terms of assembly, the mature envelope protein (Env) consists of a trimer of SU-TM heterodimers attached by noncovalent interactions or by a labile interchain disulfide bond. Specific enzymatic cleavages in vivo yield mature proteins. Envelope glycoproteins are synthesized as an inactive precursor that is N-glycosylated and processed likely by host cell furin or by a furin-like protease in the Golgi to yield the mature SU and TM proteins. The cleavage site between SU and TM requires the minimal sequence [KR]-X-[KR]-R. Post-translationally, the transmembrane protein is palmitoylated.

Its subcellular location is the virion membrane. It localises to the host cell membrane. Its function is as follows. The surface protein (SU) attaches the virus to the host cell by binding to its receptor. This interaction triggers the refolding of the transmembrane protein (TM) and is thought to activate its fusogenic potential by unmasking its fusion peptide. Fusion occurs at the host cell plasma membrane. The transmembrane protein (TM) acts as a class I viral fusion protein. Under the current model, the protein has at least 3 conformational states: pre-fusion native state, pre-hairpin intermediate state, and post-fusion hairpin state. During viral and target cell membrane fusion, the coiled coil regions (heptad repeats) assume a trimer-of-hairpins structure, positioning the fusion peptide in close proximity to the C-terminal region of the ectodomain. The formation of this structure appears to drive apposition and subsequent fusion of viral and target cell membranes. Membranes fusion leads to delivery of the nucleocapsid into the cytoplasm. The polypeptide is Envelope glycoprotein gp160 (env) (Maedi visna virus (strain KV1772) (MVV)).